An 884-amino-acid polypeptide reads, in one-letter code: Microsomal triglyceride transfer protein large subunit (884 aa).

The signal sequence occupies residues 1 to 21 (MMPVAGLLLCVTAVLCTSALG). The Vitellogenin domain maps to 26–660 (LDNGKLYRYS…QSNNALLHGL (635 aa)). A disulfide bond links C172 and C192. N348 carries an N-linked (GlcNAc...) asparagine glycan. The cysteines at positions 438 and 443 are disulfide-linked. Residue N787 is glycosylated (N-linked (GlcNAc...) asparagine).

As to quaternary structure, heterodimer; heterodimerizes with the protein disulfide isomerase. In terms of tissue distribution, highest expression in the proximal part of the anterior intestine. Lower expression in the distal part of the anterior intestine, in the posterior portion of the intestinal tube and liver. Very low expression levels in heart, brain, ovary, testis and kidney.

The protein resides in the endoplasmic reticulum. It localises to the golgi apparatus. The enzyme catalyses a 1,2-diacyl-sn-glycero-3-phosphocholine(in) = a 1,2-diacyl-sn-glycero-3-phosphocholine(out). The catalysed reaction is a 1,2-diacyl-sn-glycero-3-phosphoethanolamine(in) = a 1,2-diacyl-sn-glycero-3-phosphoethanolamine(out). It catalyses the reaction a cholesterol ester(in) = a cholesterol ester(out). It carries out the reaction a triacyl-sn-glycerol(in) = a triacyl-sn-glycerol(out). Its activity is regulated as follows. Inhibited by naringenin. Catalyzes the transport of triglyceride between phospholipid surfaces. Catalyzes the transport of cholesteryl ester, and phospholipid between phospholipid surfaces. Required for the assembly and secretion of plasma lipoproteins that contain apolipoprotein B. Required for yolk lipid utilization and absorption of dietary lipids in larvae. The sequence is that of Microsomal triglyceride transfer protein large subunit from Danio rerio (Zebrafish).